Consider the following 424-residue polypeptide: Glutamyl-tRNA(Gln) amidotransferase subunit D (424 aa).

Residues 58–79 form a disordered region; it reads NTNGGLNGGKEHKTAGEEVQKS. A compositionally biased stretch (basic and acidic residues) spans 66–78; sequence GKEHKTAGEEVQK. Residues 84–406 enclose the Asparaginase/glutaminase domain; it reads PKVAILSTGG…LGQTDEFNEA (323 aa). Catalysis depends on residues Thr94, Thr170, Asp171, and Lys247.

It belongs to the asparaginase 1 family. GatD subfamily. In terms of assembly, heterodimer of GatD and GatE.

The enzyme catalyses L-glutamyl-tRNA(Gln) + L-glutamine + ATP + H2O = L-glutaminyl-tRNA(Gln) + L-glutamate + ADP + phosphate + H(+). Allows the formation of correctly charged Gln-tRNA(Gln) through the transamidation of misacylated Glu-tRNA(Gln) in organisms which lack glutaminyl-tRNA synthetase. The reaction takes place in the presence of glutamine and ATP through an activated gamma-phospho-Glu-tRNA(Gln). The GatDE system is specific for glutamate and does not act on aspartate. In Methanosarcina barkeri (strain Fusaro / DSM 804), this protein is Glutamyl-tRNA(Gln) amidotransferase subunit D.